The sequence spans 921 residues: MEYKNTLLMPKTEFPMRGNLPKREPAMQEKWAEMNIYETVQEHTKGRPLFVLHDGPPYANGDIHMGHALNKVLKDFIVRYKSMTGFCAPYVPGWDTHGLPIEQALTNKGVKRKEMTVAEFRKLCAEYAYEQVERQREQFKRLGVRADWDNPYITLEPAYEAQQIKVFGDMAKKGYIYKGQKPVYWSPTSESALAEAEIEYQDKKSASIYVAFSVKDGKNVLEGDEKYIIWTTTPWTLPANLGISVHPELEYAIVKVNDEKYIIASELFETVAKTLEWENAEVVKTVKGSELEYTVAKHPFYDRDSLVMLGDHVTTDAGTGCVHTAPGHGEDDFIVGKKYGLEVLCPVDDKGVLTEEAPGFEGLFYDKANKPITEKLEEVGALLKLTFITHSYPHDWRTKKPIIFRATAQWFASIEAFRKELLEAVAETKWVPAWGETRLHNMVRDRGDWCISRQRAWGVPIPVFYAENGDPIITDETINHVADLFREHGSNVWFEREAKDLLPEGFTHPGSPNGEFRKETDIMDVWFDSGSSHQAVLEERDDLQRPADLYLEGSDQYRGWFNSSLSTAVAVTGKAPYKGVLSHGFVLDGEGRKMSKSIGNIVVPKKIMDQLGGDILRLWVSSVDYQSDVRISDDILKQVAEVYRKIRNTFRFLLGNLDDFKPSENTVAVAELREVDRYMLVKLNDLITKVKEAYETYDFAAVYHAIHNFCTIDLSSFYLDFAKDILYIEGANHEDRRAIQTVLYDVLVALTKLVTPILPHTADEVWPYIPGVTEESVQLTDMPEAVQLDDAEALKTKWDAFMTLRDDVLKALEVARNEKVIGKSLNASITLYPTAEMKAMLESINEDLKQLFIVSEYKLGGMMEEAPADAPKYEHTAVVVAQATGETCERCWVVSETIGKDAEHETLCERCATVVKENYVK.

Residues 57-67 (PYANGDIHMGH) carry the 'HIGH' region motif. Residue Glu552 coordinates L-isoleucyl-5'-AMP. Residues 593 to 597 (KMSKS) carry the 'KMSKS' region motif. ATP is bound at residue Lys596. Zn(2+)-binding residues include Cys888, Cys891, Cys908, and Cys911.

Belongs to the class-I aminoacyl-tRNA synthetase family. IleS type 1 subfamily. In terms of assembly, monomer. Zn(2+) is required as a cofactor.

The protein resides in the cytoplasm. The enzyme catalyses tRNA(Ile) + L-isoleucine + ATP = L-isoleucyl-tRNA(Ile) + AMP + diphosphate. Functionally, catalyzes the attachment of isoleucine to tRNA(Ile). As IleRS can inadvertently accommodate and process structurally similar amino acids such as valine, to avoid such errors it has two additional distinct tRNA(Ile)-dependent editing activities. One activity is designated as 'pretransfer' editing and involves the hydrolysis of activated Val-AMP. The other activity is designated 'posttransfer' editing and involves deacylation of mischarged Val-tRNA(Ile). This is Isoleucine--tRNA ligase from Bacillus anthracis (strain A0248).